The chain runs to 293 residues: ATP synthase gamma chain (293 aa).

It belongs to the ATPase gamma chain family. In terms of assembly, F-type ATPases have 2 components, CF(1) - the catalytic core - and CF(0) - the membrane proton channel. CF(1) has five subunits: alpha(3), beta(3), gamma(1), delta(1), epsilon(1). CF(0) has three main subunits: a, b and c.

The protein resides in the cell inner membrane. Its function is as follows. Produces ATP from ADP in the presence of a proton gradient across the membrane. The gamma chain is believed to be important in regulating ATPase activity and the flow of protons through the CF(0) complex. The polypeptide is ATP synthase gamma chain (Sinorhizobium fredii (strain NBRC 101917 / NGR234)).